A 101-amino-acid polypeptide reads, in one-letter code: Small ribosomal subunit protein uS14 (101 aa).

A disordered region spans residues 1–21; the sequence is MAKTSSVEKNNRRRKLADQYG.

Belongs to the universal ribosomal protein uS14 family. Part of the 30S ribosomal subunit. Contacts proteins S3 and S10.

In terms of biological role, binds 16S rRNA, required for the assembly of 30S particles and may also be responsible for determining the conformation of the 16S rRNA at the A site. The protein is Small ribosomal subunit protein uS14 of Mesorhizobium japonicum (strain LMG 29417 / CECT 9101 / MAFF 303099) (Mesorhizobium loti (strain MAFF 303099)).